Consider the following 340-residue polypeptide: Maltose epimerase (340 aa).

A substrate-binding site is contributed by Arg-79. The active-site Proton donor is His-178. Substrate is bound at residue Asp-247. The active-site Proton acceptor is Glu-305.

The protein belongs to the aldose epimerase family.

The catalysed reaction is alpha-maltose = beta-maltose. The protein operates within carbohydrate metabolism; hexose metabolism. Its function is as follows. Catalyzes the interconversion of alpha and beta anomers of maltose. This chain is Maltose epimerase, found in Levilactobacillus brevis (strain ATCC 367 / BCRC 12310 / CIP 105137 / JCM 1170 / LMG 11437 / NCIMB 947 / NCTC 947) (Lactobacillus brevis).